The following is a 113-amino-acid chain: Photosystem II reaction center Psb28 protein (113 aa).

It belongs to the Psb28 family. In terms of assembly, part of the photosystem II complex.

The protein localises to the cellular thylakoid membrane. This chain is Photosystem II reaction center Psb28 protein, found in Prochlorococcus marinus (strain NATL1A).